A 559-amino-acid chain; its full sequence is Innexin-10 (559 aa).

4 consecutive transmembrane segments (helical) span residues 28 to 48, 102 to 122, 182 to 202, and 283 to 303; these read YFTC…QFGG, QWVP…SLLW, FLWL…YLCT, and IFIL…GSFF. Disordered stretches follow at residues 488–514 and 527–559; these read EEKQ…YQNQ and YRTP…STFK. Residues 503–514 are compositionally biased toward low complexity; sequence YTNQNPTPYQNQ. Residues 528 to 559 show a composition bias toward polar residues; it reads RTPSLSRGTDSRPVSTATDTDQTKKQSMSTFK.

Belongs to the pannexin family.

Its subcellular location is the cell membrane. The protein localises to the cell junction. It is found in the gap junction. In terms of biological role, structural component of the gap junctions. This chain is Innexin-10 (inx-10), found in Caenorhabditis elegans.